Reading from the N-terminus, the 206-residue chain is Pyridoxal 5'-phosphate synthase subunit PdxT (206 aa).

59–61 serves as a coordination point for L-glutamine; sequence GES. The Nucleophile role is filled by cysteine 91. Residues arginine 123 and 151–152 contribute to the L-glutamine site; that span reads IR. Active-site charge relay system residues include histidine 187 and glutamate 189.

Belongs to the glutaminase PdxT/SNO family. In terms of assembly, in the presence of PdxS, forms a dodecamer of heterodimers. Only shows activity in the heterodimer.

The catalysed reaction is aldehydo-D-ribose 5-phosphate + D-glyceraldehyde 3-phosphate + L-glutamine = pyridoxal 5'-phosphate + L-glutamate + phosphate + 3 H2O + H(+). It carries out the reaction L-glutamine + H2O = L-glutamate + NH4(+). The protein operates within cofactor biosynthesis; pyridoxal 5'-phosphate biosynthesis. Functionally, catalyzes the hydrolysis of glutamine to glutamate and ammonia as part of the biosynthesis of pyridoxal 5'-phosphate. The resulting ammonia molecule is channeled to the active site of PdxS. The chain is Pyridoxal 5'-phosphate synthase subunit PdxT from Mycobacterium sp. (strain JLS).